The primary structure comprises 554 residues: (E)-beta-caryophyllene synthase (554 aa).

2 residues coordinate Mn(2+): D313 and D317. The DDXXD motif signature appears at D313–D317. Homodimerization regions lie at residues Y319 to L325 and E391 to I427. Mn(2+)-binding residues include D457 and E465.

Belongs to the terpene synthase family. In terms of assembly, homodimer. It depends on Mn(2+) as a cofactor. Mg(2+) serves as cofactor. As to expression, expressed in peltate glandular trichomes. Present at low levels in flowers, leaves and stems.

The catalysed reaction is (2E,6E)-farnesyl diphosphate = (-)-(E)-beta-caryophyllene + diphosphate. It catalyses the reaction (2E,6E)-farnesyl diphosphate = alpha-humulene + diphosphate. Its pathway is secondary metabolite biosynthesis; terpenoid biosynthesis. Functionally, involved in the biosynthesis of phenolic sesquiterpenes natural products. Sesquiterpene synthase converting (2E,6E)-farnesyl diphosphate (FPP) to (E)-beta-caryophyllene and alpha-humulene. The sequence is that of (E)-beta-caryophyllene synthase from Origanum vulgare (Wild marjoram).